The primary structure comprises 186 residues: Peptidyl-tRNA hydrolase (186 aa).

Tyrosine 14 contacts tRNA. Residue histidine 19 is the Proton acceptor of the active site. TRNA is bound by residues phenylalanine 64, asparagine 66, and asparagine 112.

The protein belongs to the PTH family. As to quaternary structure, monomer.

The protein localises to the cytoplasm. It carries out the reaction an N-acyl-L-alpha-aminoacyl-tRNA + H2O = an N-acyl-L-amino acid + a tRNA + H(+). Its function is as follows. Hydrolyzes ribosome-free peptidyl-tRNAs (with 1 or more amino acids incorporated), which drop off the ribosome during protein synthesis, or as a result of ribosome stalling. Functionally, catalyzes the release of premature peptidyl moieties from peptidyl-tRNA molecules trapped in stalled 50S ribosomal subunits, and thus maintains levels of free tRNAs and 50S ribosomes. This chain is Peptidyl-tRNA hydrolase, found in Mycoplasma capricolum subsp. capricolum (strain California kid / ATCC 27343 / NCTC 10154).